A 447-amino-acid polypeptide reads, in one-letter code: Chromosomal replication initiator protein DnaA (447 aa).

The domain I, interacts with DnaA modulators stretch occupies residues 1–74; sequence MPDVESFWHS…TGFKLTGAEV (74 aa). The interval 74 to 109 is domain II; that stretch reads VMPHFVVADEKDAALAQELEEPAEEEVVFSEQSKKA. The domain III, AAA+ region stretch occupies residues 110–326; that stretch reads MLNPKYTFDT…GALVRVQAFA (217 aa). Glycine 154, glycine 156, lysine 157, and threonine 158 together coordinate ATP. Positions 327–447 are domain IV, binds dsDNA; it reads TINGEDITTS…VSEIKNLLNS (121 aa).

The protein belongs to the DnaA family. In terms of assembly, oligomerizes as a right-handed, spiral filament on DNA at oriC.

It localises to the cytoplasm. Plays an essential role in the initiation and regulation of chromosomal replication. ATP-DnaA binds to the origin of replication (oriC) to initiate formation of the DNA replication initiation complex once per cell cycle. Binds the DnaA box (a 9 base pair repeat at the origin) and separates the double-stranded (ds)DNA. Forms a right-handed helical filament on oriC DNA; dsDNA binds to the exterior of the filament while single-stranded (ss)DNA is stabiized in the filament's interior. The ATP-DnaA-oriC complex binds and stabilizes one strand of the AT-rich DNA unwinding element (DUE), permitting loading of DNA polymerase. After initiation quickly degrades to an ADP-DnaA complex that is not apt for DNA replication. Binds acidic phospholipids. Its function is as follows. Strand separation requires the DnaA boxes and adjacent DnaA-trio motifs as well as ATP. The protein is Chromosomal replication initiator protein DnaA of Enterococcus faecalis (strain ATCC 700802 / V583).